An 888-amino-acid chain; its full sequence is Patched domain-containing protein 1 (888 aa).

Residues 20–40 (FIASHPVFFASAPVLISILLG) traverse the membrane as a helical segment. N-linked (GlcNAc...) asparagine glycosylation is found at asparagine 77, asparagine 133, and asparagine 167. The SSD domain occupies 268–427 (SERYLVTSLI…LSFYGSSLVF (160 aa)). 2 helical membrane-spanning segments follow: residues 273–293 (VTSLILVVTMAILCCSMQDCV) and 298–318 (WLGLLGLVTISLATLTAAGII). N-linked (GlcNAc...) asparagine glycosylation is found at asparagine 319 and asparagine 326. 4 consecutive transmembrane segments (helical) span residues 328–348 (TFLGVPFVMLGHGLYGTFEML), 373–393 (LSFSLTTAMYLVTFGIGASPF), 407–427 (CIAILFNYLYVLSFYGSSLVF), and 502–522 (PFVVLFYLIYISFALMGYLQV). N-linked (GlcNAc...) asparagine glycans are attached at residues asparagine 568, asparagine 599, and asparagine 608. The next 2 helical transmembrane spans lie at 707–727 (ALFLLFFSAFLVADSLINVWI) and 738–758 (VIGFMTLWKVELDCISVLCLI). N-linked (GlcNAc...) asparagine glycosylation is present at asparagine 762. Residues 795–815 (GVAILQSYLCYIVGLFPLAAV) traverse the membrane as a helical segment. Asparagine 818 carries an N-linked (GlcNAc...) asparagine glycan. The chain crosses the membrane as a helical span at residues 826–846 (CLFLIAFVTFFHCFAILPVIL).

Belongs to the patched family. In terms of tissue distribution, broadly expressed in the brain. Selectively expressed in the thalamic reticular nucleus (TRN) in early development and continues to be enriched in this structure throughout adult life.

The protein localises to the cell membrane. The protein resides in the cell projection. Its subcellular location is the dendritic spine. In terms of biological role, required for the development and function of the thalamic reticular nucleus (TRN), a part of the thalamus that is critical for thalamocortical transmission, generation of sleep rhythms, sensorimotor processing and attention. Can bind cholesterol in vitro. This is Patched domain-containing protein 1 from Mus musculus (Mouse).